The sequence spans 64 residues: Putative antitoxin MJ0975 (64 aa).

This sequence belongs to the UPF0165 family.

Possibly the antitoxin component of a type II toxin-antitoxin (TA) system. Its cognate toxin is VapC2 (Potential). The chain is Putative antitoxin MJ0975 (vapB2) from Methanocaldococcus jannaschii (strain ATCC 43067 / DSM 2661 / JAL-1 / JCM 10045 / NBRC 100440) (Methanococcus jannaschii).